A 313-amino-acid chain; its full sequence is Acetyl-coenzyme A carboxylase carboxyl transferase subunit beta, chloroplastic (313 aa).

The CoA carboxyltransferase N-terminal domain maps to 47-313 (LWTRCDNCEN…SAPCRRSNNS (267 aa)). 4 residues coordinate Zn(2+): Cys51, Cys54, Cys70, and Cys73. The C4-type zinc finger occupies 51–73 (CDNCENMLYIRFLRQNKRICEEC).

Belongs to the AccD/PCCB family. As to quaternary structure, acetyl-CoA carboxylase is a heterohexamer composed of biotin carboxyl carrier protein, biotin carboxylase and 2 subunits each of ACCase subunit alpha and ACCase plastid-coded subunit beta (accD). It depends on Zn(2+) as a cofactor.

It is found in the plastid. It localises to the chloroplast stroma. The catalysed reaction is N(6)-carboxybiotinyl-L-lysyl-[protein] + acetyl-CoA = N(6)-biotinyl-L-lysyl-[protein] + malonyl-CoA. It functions in the pathway lipid metabolism; malonyl-CoA biosynthesis; malonyl-CoA from acetyl-CoA: step 1/1. Its function is as follows. Component of the acetyl coenzyme A carboxylase (ACC) complex. Biotin carboxylase (BC) catalyzes the carboxylation of biotin on its carrier protein (BCCP) and then the CO(2) group is transferred by the transcarboxylase to acetyl-CoA to form malonyl-CoA. The polypeptide is Acetyl-coenzyme A carboxylase carboxyl transferase subunit beta, chloroplastic (Anthoceros angustus (Hornwort)).